The sequence spans 341 residues: Phenylalanine--tRNA ligase alpha subunit (341 aa).

A Mg(2+)-binding site is contributed by E253.

It belongs to the class-II aminoacyl-tRNA synthetase family. Phe-tRNA synthetase alpha subunit type 1 subfamily. Tetramer of two alpha and two beta subunits. The cofactor is Mg(2+).

It localises to the cytoplasm. The catalysed reaction is tRNA(Phe) + L-phenylalanine + ATP = L-phenylalanyl-tRNA(Phe) + AMP + diphosphate + H(+). In Methylococcus capsulatus (strain ATCC 33009 / NCIMB 11132 / Bath), this protein is Phenylalanine--tRNA ligase alpha subunit.